A 185-amino-acid polypeptide reads, in one-letter code: Protein GrpE (185 aa).

Positions 1–40 (MSEEKKDEILEQETVETKEEIKTEEAEQKTESLEEKVARL) are disordered.

Belongs to the GrpE family. As to quaternary structure, homodimer.

The protein localises to the cytoplasm. Functionally, participates actively in the response to hyperosmotic and heat shock by preventing the aggregation of stress-denatured proteins, in association with DnaK and GrpE. It is the nucleotide exchange factor for DnaK and may function as a thermosensor. Unfolded proteins bind initially to DnaJ; upon interaction with the DnaJ-bound protein, DnaK hydrolyzes its bound ATP, resulting in the formation of a stable complex. GrpE releases ADP from DnaK; ATP binding to DnaK triggers the release of the substrate protein, thus completing the reaction cycle. Several rounds of ATP-dependent interactions between DnaJ, DnaK and GrpE are required for fully efficient folding. The polypeptide is Protein GrpE (Aliarcobacter butzleri (strain RM4018) (Arcobacter butzleri)).